The sequence spans 406 residues: Succinylornithine transaminase (406 aa).

Residue Lys252 is modified to N6-(pyridoxal phosphate)lysine.

This sequence belongs to the class-III pyridoxal-phosphate-dependent aminotransferase family. AstC subfamily. Requires pyridoxal 5'-phosphate as cofactor.

The enzyme catalyses N(2)-succinyl-L-ornithine + 2-oxoglutarate = N-succinyl-L-glutamate 5-semialdehyde + L-glutamate. The protein operates within amino-acid degradation; L-arginine degradation via AST pathway; L-glutamate and succinate from L-arginine: step 3/5. Functionally, catalyzes the transamination of N(2)-succinylornithine and alpha-ketoglutarate into N(2)-succinylglutamate semialdehyde and glutamate. Can also act as an acetylornithine aminotransferase. This chain is Succinylornithine transaminase, found in Escherichia coli O157:H7.